Here is a 526-residue protein sequence, read N- to C-terminus: Peptide chain release factor 3 (526 aa).

The 270-residue stretch at 8-277 (NKRRTFAIIS…GLTQWAPAPQ (270 aa)) folds into the tr-type G domain. Residues 17–24 (SHPDAGKT), 85–89 (DTPGH), and 139–142 (NKLD) each bind GTP.

This sequence belongs to the TRAFAC class translation factor GTPase superfamily. Classic translation factor GTPase family. PrfC subfamily.

The protein resides in the cytoplasm. Increases the formation of ribosomal termination complexes and stimulates activities of RF-1 and RF-2. It binds guanine nucleotides and has strong preference for UGA stop codons. It may interact directly with the ribosome. The stimulation of RF-1 and RF-2 is significantly reduced by GTP and GDP, but not by GMP. This is Peptide chain release factor 3 from Histophilus somni (strain 2336) (Haemophilus somnus).